A 1016-amino-acid chain; its full sequence is DENN domain-containing protein 1A (1016 aa).

Residues 13–145 form the uDENN domain; the sequence is FEVYVEVAYP…HRLPIPDPGV (133 aa). The cDENN domain occupies 162 to 298; it reads ELPSIPENRN…VISSLKNRLK (137 aa). Residues 300–378 form the dDENN domain; the sequence is VSTTTGDGVA…DGRLDLLNSG (79 aa). Positions 381 to 385 match the FXDXF motif motif; it reads FSDVF. The disordered stretch occupies residues 453–565; it reads DITENGCVSS…GPTPAPPDRA (113 aa). Ser473 is subject to Phosphoserine. Basic and acidic residues predominate over residues 479–489; it reads QDPRLREDRRP. A compositionally biased stretch (basic residues) spans 500–509; it reads PRPHVVRRPK. Thr519 carries the post-translational modification Phosphothreonine. Ser520, Ser522, Ser523, Ser536, Ser538, and Ser546 each carry phosphoserine. The Clathrin box motif lies at 569-578; it reads DLLEDVFSSL. Ser592 bears the Phosphoserine mark. Residues 681–737 are disordered; sequence LSPSIKEETPIPTPGSITIPRPQGRKTPELGIVPPPPTARPAKLQAAGGPLGDFSSE. Ser750 carries the phosphoserine modification. Arg760 carries the post-translational modification Omega-N-methylarginine. Disordered stretches follow at residues 763–783 and 935–1016; these read PQGP…AGTG and SARA…ETFE. Residues 954 to 970 show a composition bias toward pro residues; that stretch reads LLPPRPPQSLQPTPQPS. 2 stretches are compositionally biased toward basic and acidic residues: residues 977 to 988 and 1007 to 1016; these read DPFEDLLRKTKQ and QLRRQWETFE.

As to quaternary structure, interacts with RAB35. Interacts with clathrin and with the adapter protein complex 2, AP-2. Interacts with ITSN1 and SH3GL2. Interacts (when phosphorylated) with YWHAE. Post-translationally, phosphorylated on serine and/or threonine in an Akt-dependent manner. Phosphorylation probably regulates the guanine nucleotide exchange factor (GEF) activity, possibly by disrupting an intramolecular interaction between the DENN domain and the C-terminus of the protein, thereby relieving the autoinhibition.

It localises to the cytoplasmic vesicle. It is found in the clathrin-coated vesicle membrane. The protein localises to the presynaptic cell membrane. With respect to regulation, the guanine nucleotide exchange factor (GEF) activity is autoinhibited. Autoinhibition may be the result of intramolecular interaction between the DENN domain and the C-terminus, which is disrupted upon phosphorylation. Activation is regulated by Akt activation. Its function is as follows. Guanine nucleotide exchange factor (GEF) regulating clathrin-mediated endocytosis through RAB35 activation. Promotes the exchange of GDP to GTP, converting inactive GDP-bound RAB35 into its active GTP-bound form. Regulates clathrin-mediated endocytosis of synaptic vesicles and mediates exit from early endosomes. Binds phosphatidylinositol-phosphates (PtdInsPs), with some preference for PtdIns(3)P. The sequence is that of DENN domain-containing protein 1A (Dennd1a) from Mus musculus (Mouse).